Here is a 1295-residue protein sequence, read N- to C-terminus: DNA-directed RNA polymerase subunit beta' (1295 aa).

Positions 60, 62, 75, and 78 each coordinate Zn(2+). Mg(2+) is bound by residues D516, D518, and D520. 4 residues coordinate Zn(2+): C841, C914, C921, and C924.

It belongs to the RNA polymerase beta' chain family. In terms of assembly, the RNAP catalytic core consists of 2 alpha, 1 beta, 1 beta' and 1 omega subunit. When a sigma factor is associated with the core the holoenzyme is formed, which can initiate transcription. The cofactor is Mg(2+). It depends on Zn(2+) as a cofactor.

It carries out the reaction RNA(n) + a ribonucleoside 5'-triphosphate = RNA(n+1) + diphosphate. In terms of biological role, DNA-dependent RNA polymerase catalyzes the transcription of DNA into RNA using the four ribonucleoside triphosphates as substrates. This Dehalococcoides mccartyi (strain ATCC BAA-2266 / KCTC 15142 / 195) (Dehalococcoides ethenogenes (strain 195)) protein is DNA-directed RNA polymerase subunit beta'.